The following is a 241-amino-acid chain: Glutathione S-transferase theta-3 (241 aa).

Residues 2 to 82 (GLELYLDLMS…YLSRKYKAPD (81 aa)) enclose the GST N-terminal domain. Glutathione is bound by residues 53 to 54 (KV) and 66 to 67 (ES). In terms of domain architecture, GST C-terminal spans 88–222 (DLQTRARVDE…VVLKAKDMPP (135 aa)).

It belongs to the GST superfamily. Theta family. Homodimer. Expressed strongly in liver, and at lower levels in kidney and testis.

The protein localises to the cytoplasm. It catalyses the reaction RX + glutathione = an S-substituted glutathione + a halide anion + H(+). Functionally, conjugation of reduced glutathione to a wide number of exogenous and endogenous hydrophobic electrophiles. Shows high activity towards 4-nitrobenzyl chloride (4-NBC). Also has lower activity towards 1,2-epoxy-3-(p-nitrophenoxy)propane (EPNP), cumene hydroperoxide, 1-chloro-2,4-dinitrobenzene (CDNB), 7-chloro-4-nitrobenzo-2-oxa-1,3-diazole (NBD-Cl), and ethacrynic acid. The chain is Glutathione S-transferase theta-3 from Mus musculus (Mouse).